Reading from the N-terminus, the 403-residue chain is Phosphopentomutase (403 aa).

Positions 13, 298, 303, 339, 340, and 351 each coordinate Mn(2+).

This sequence belongs to the phosphopentomutase family. It depends on Mn(2+) as a cofactor.

The protein localises to the cytoplasm. The enzyme catalyses 2-deoxy-alpha-D-ribose 1-phosphate = 2-deoxy-D-ribose 5-phosphate. It carries out the reaction alpha-D-ribose 1-phosphate = D-ribose 5-phosphate. It functions in the pathway carbohydrate degradation; 2-deoxy-D-ribose 1-phosphate degradation; D-glyceraldehyde 3-phosphate and acetaldehyde from 2-deoxy-alpha-D-ribose 1-phosphate: step 1/2. Isomerase that catalyzes the conversion of deoxy-ribose 1-phosphate (dRib-1-P) and ribose 1-phosphate (Rib-1-P) to deoxy-ribose 5-phosphate (dRib-5-P) and ribose 5-phosphate (Rib-5-P), respectively. The polypeptide is Phosphopentomutase (Streptococcus pyogenes serotype M2 (strain MGAS10270)).